Reading from the N-terminus, the 253-residue chain is Probable U2 small nuclear ribonucleoprotein A' (253 aa).

LRR repeat units follow at residues 20–41 (NMREINLRGQKIPVIENMGVTR), 43–64 (QFDVIDLTDNDIRKLDNFPTFS), 65–86 (RLNTLYLHNNRINYIAPDIATK), and 89–110 (NLKTLALTNNNICELGDIEPLA). The LRRCT domain maps to 123 to 161 (NPITHKDNYRMYMIYKLPTVRVIDFNRVRLTEREAAKKM). Disordered stretches follow at residues 163–205 (KGKS…EDRE) and 232–253 (VPEKGWNRQMDQNGADGEAMES). The segment covering 169–182 (KARDAIQKSVHTED) has biased composition (basic and acidic residues).

Belongs to the U2 small nuclear ribonucleoprotein A family. As to quaternary structure, interacts with rnp-3.

The protein resides in the nucleus. Its function is as follows. This protein is associated with sn-RNP U2. It helps the A' protein to bind stem loop IV of U2 snRNA. Required maternally for early embryonic development and zygotically for germline and somatic development. Has a role in the switch from mitosis to meiosis. Might function in alternative splicing. This is Probable U2 small nuclear ribonucleoprotein A' (mog-2) from Caenorhabditis elegans.